We begin with the raw amino-acid sequence, 479 residues long: Ammonium transporter Rh type C (479 aa).

The Cytoplasmic segment spans residues 1–9 (MAWNTNLRW). A helical membrane pass occupies residues 10–30 (RLPLTCLLLQVIMVILFGVFV). Residues 31 to 60 (RYDFEADAHWWSERTHKNLSDMENEFYYRY) are Extracellular-facing. Residue Asn-48 is glycosylated (N-linked (GlcNAc...) asparagine). The helical transmembrane segment at 61-81 (PSFQDVHVMVFVGFGFLMTFL) threads the bilayer. Over 82–85 (QRYG) the chain is Cytoplasmic. The chain crosses the membrane as a helical span at residues 86–106 (FSAVGFNFLLAAFGIQWALLM). The Extracellular portion of the chain corresponds to 107–123 (QGWFHFLQDRYIVVGVE). Residues 124 to 144 (NLINADFCVASVCVAFGAVLG) traverse the membrane as a helical segment. The Cytoplasmic segment spans residues 145–148 (KVSP). The helical transmembrane segment at 149–169 (IQLLIMTFFQVTLFAVNEFIL) threads the bilayer. Over 170 to 177 (LNLLKVKD) the chain is Extracellular. A helical transmembrane segment spans residues 178 to 200 (AGGSMTIHTFGAYFGLTVTRILY). Topologically, residues 201–218 (RRNLEQSKERQNSVYQSD) are cytoplasmic. Residues 219-239 (LFAMIGTLFLWMYWPSFNSAI) form a helical membrane-spanning segment. Topologically, residues 240 to 250 (SYHGDSQHRAA) are extracellular. A helical transmembrane segment spans residues 251–271 (INTYCSLAACVLTSVAISSAL). Residues 272–281 (HKKGKLDMVH) are Cytoplasmic-facing. A helical transmembrane segment spans residues 282–302 (IQNATLAGGVAVGTAAEMMLM). Position 303 (Pro-303) is a topological domain, extracellular. A helical transmembrane segment spans residues 304 to 324 (YGALIIGFVCGIISTLGFVYL). Over 325–345 (TPFLESRLHIQDTCGINNLHG) the chain is Cytoplasmic. A helical membrane pass occupies residues 346–366 (IPGIIGGIVGAVTAASASLEV). Over 367–394 (YGKEGLVHSFDFQGFNGDWTARTQGKFQ) the chain is Extracellular. Residues 395-415 (IYGLLVTLAMALMGGIIVGLI) traverse the membrane as a helical segment. At 416-479 (LRLPFWGQPS…PMASSVPLVP (64 aa)) the chain is on the cytoplasmic side.

It belongs to the ammonium transporter (TC 2.A.49) family. Rh subfamily. Homotrimer. N-glycosylated. Expressed in brain, testis, placenta, pancreas, esophagus and prostate. Expressed in squamous epithelial tissues (at protein level). Expressed in kidney.

It localises to the cell membrane. The protein localises to the apical cell membrane. The catalysed reaction is NH4(+)(in) = NH4(+)(out). It catalyses the reaction methylamine(out) = methylamine(in). It carries out the reaction CO2(out) = CO2(in). Functionally, ammonium transporter involved in the maintenance of acid-base homeostasis. Transports ammonium and its related derivative methylammonium across the plasma membrane of epithelial cells likely contributing to renal transepithelial ammonia transport and ammonia metabolism. Postulated to primarily mediate an electroneutral bidirectional transport of NH3 ammonia species according to a mechanism that implies interaction of an NH4(+) ion with acidic residues of the pore entry followed by dissociation of NH4(+) into NH3 and H(+). As a result NH3 transits through the central pore and is protonated on the extracellular side reforming NH4(+). May act as a CO2 channel providing for renal acid secretion. This chain is Ammonium transporter Rh type C (RHCG), found in Homo sapiens (Human).